A 718-amino-acid chain; its full sequence is Protein Hook homolog 1 (718 aa).

The 117-residue stretch at 8–124 (PLLCDSLILW…RLMQLILGCA (117 aa)) folds into the Calponin-homology (CH) domain. Coiled-coil stretches lie at residues 164–428 (SASD…ELRY) and 473–652 (LLLQ…AKLR).

It belongs to the hook family. As to quaternary structure, interacts with microtubules.

It localises to the cytoplasm. Its subcellular location is the cytoskeleton. In terms of biological role, may function to promote vesicle trafficking and/or fusion. In Gallus gallus (Chicken), this protein is Protein Hook homolog 1 (HOOK1).